A 149-amino-acid polypeptide reads, in one-letter code: Large ribosomal subunit protein uL11 (149 aa).

Belongs to the universal ribosomal protein uL11 family. In terms of assembly, part of the ribosomal stalk of the 50S ribosomal subunit. Interacts with L10 and the large rRNA to form the base of the stalk. L10 forms an elongated spine to which L12 dimers bind in a sequential fashion forming a multimeric L10(L12)X complex. One or more lysine residues are methylated.

In terms of biological role, forms part of the ribosomal stalk which helps the ribosome interact with GTP-bound translation factors. The chain is Large ribosomal subunit protein uL11 from Methylobacterium radiotolerans (strain ATCC 27329 / DSM 1819 / JCM 2831 / NBRC 15690 / NCIMB 10815 / 0-1).